The primary structure comprises 297 residues: tRNA (guanine(37)-N(1))/4-demethylwyosine(37)-methyltransferase Taw22 (297 aa).

S-adenosyl-L-methionine-binding positions include Arg-89, Phe-106, and 128-129; that span reads EL.

The protein belongs to the class I-like SAM-binding methyltransferase superfamily. TRM5/TYW2 family.

Its subcellular location is the cytoplasm. It catalyses the reaction guanosine(37) in tRNA + S-adenosyl-L-methionine = N(1)-methylguanosine(37) in tRNA + S-adenosyl-L-homocysteine + H(+). The enzyme catalyses 4-demethylwyosine(37) in tRNA(Phe) + S-adenosyl-L-methionine = isowyosine(37) in tRNA(Phe) + S-adenosyl-L-homocysteine + H(+). Its function is as follows. Catalyzes both the N1-methylation of guanosine and the C7-methylation of 4-demethylwyosine (imG-14) at position 37 in tRNA(Phe). This Nanoarchaeum equitans (strain Kin4-M) protein is tRNA (guanine(37)-N(1))/4-demethylwyosine(37)-methyltransferase Taw22.